Here is a 184-residue protein sequence, read N- to C-terminus: MFSSKENSLGAKRAPFSSNTTSSQRVAAQAAKRASSGAFAQLTSSQIQELKEAFALLDKDGDGNIGREDVKTMLTSLNQDASEDSINHMFESINPPINLAAFLTAMGSMLCRISPRNDLLEAFSTFDDTQSGKIPISTMRDALSSMGDRMDPQEVESILRSYTSHGVFYYEKFVDAIAGSKDSN.

The disordered stretch occupies residues 1-29 (MFSSKENSLGAKRAPFSSNTTSSQRVAAQ). Ser36 is modified (phosphoserine). 2 EF-hand domains span residues 45 to 80 (SQIQ…LNQD) and 114 to 149 (SPRN…MGDR). Residues Asp58, Asp60, Asp62, Asn64, and Asp69 each contribute to the Ca(2+) site.

In terms of assembly, binds to myosin II chains myo2 and myo3.

Its subcellular location is the cytoplasm. In Schizosaccharomyces pombe (strain 972 / ATCC 24843) (Fission yeast), this protein is Myosin regulatory light chain 1 (rlc1).